The chain runs to 176 residues: Zinc finger A20 and AN1 domain-containing stress-associated protein 9 (176 aa).

The segment at 16–50 (ASEPKLCVKGCGFFGSPSNMDLCSKCYRGICAEEA) adopts an A20-type zinc-finger fold. Positions 22, 26, 38, 41, 117, 120, 131, 133, 138, 141, 147, and 149 each coordinate Zn(2+). Residues 111–157 (PARTNRCLCCNKKVGIMGFKCKCGSTFCGEHRYPETHDCSFDFKEVG) form an AN1-type zinc finger.

In terms of biological role, may be involved in environmental stress response. This is Zinc finger A20 and AN1 domain-containing stress-associated protein 9 (SAP9) from Arabidopsis thaliana (Mouse-ear cress).